Reading from the N-terminus, the 208-residue chain is Ras-related protein Rab-6 (208 aa).

GTP-binding positions include 14 to 21 (DQSVGKTS), Thr38, 62 to 66 (TAGQE), and 120 to 123 (KTDL). A lipid anchor (S-geranylgeranyl cysteine) is attached at Cys208.

It belongs to the small GTPase superfamily. Rab family.

In terms of biological role, protein transport. Probably involved in vesicular traffic. The protein is Ras-related protein Rab-6 (rab6) of Dictyostelium discoideum (Social amoeba).